Consider the following 188-residue polypeptide: UPF0397 protein LACR_0367 (188 aa).

5 helical membrane-spanning segments follow: residues 14 to 34 (IVVA…LINI), 48 to 68 (AVLA…IGFI), 80 to 100 (APWW…GFGV), 120 to 140 (IVQF…GDIL), and 152 to 172 (QGVV…TLLL).

This sequence belongs to the UPF0397 family.

It localises to the cell membrane. This chain is UPF0397 protein LACR_0367, found in Lactococcus lactis subsp. cremoris (strain SK11).